Here is a 66-residue protein sequence, read N- to C-terminus: Phylloseptin-B1 (66 aa).

Positions 1 to 22 (MAFLKKSLFLVLFLGLVSLSIC) are cleaved as a signal peptide. The propeptide occupies 23-46 (EEEKRETEEKEYDQGEDDKSEEKR). L65 is modified (leucine amide).

Belongs to the frog skin active peptide (FSAP) family. Phylloseptin subfamily. Expressed by the skin glands.

It localises to the secreted. The protein resides in the target cell membrane. Antimicrobial peptide with activity against only a few strains of Gram-positive bacteria (S.aureus and B.megaterium). Acts in a synergistic effect in combination with Plasticin-B1 at doses that are not active alone. The sequence is that of Phylloseptin-B1 from Phyllomedusa bicolor (Two-colored leaf frog).